The primary structure comprises 259 residues: Bidirectional sugar transporter SWEET6a (259 aa).

Residues 1–9 (MISPDAARN) are Extracellular-facing. A helical membrane pass occupies residues 10 to 30 (VVGIIGNVISFGLFLAPVPTF). A MtN3/slv 1 domain is found at 10 to 98 (VVGIIGNVIS…IFFLYSPNKK (89 aa)). Residues 31-45 (WRICKRKDVEEFKAD) lie on the Cytoplasmic side of the membrane. A helical transmembrane segment spans residues 46 to 66 (PYLATLLNCMLWVFYGIPVVH). Residues 67–69 (PNS) lie on the Extracellular side of the membrane. The chain crosses the membrane as a helical span at residues 70–90 (ILVVTINGIGLLVEGTYLLIF). Topologically, residues 91–103 (FLYSPNKKRLRMC) are cytoplasmic. Residues 104 to 124 (AVLGVELVFMLAVILGVLLGA) traverse the membrane as a helical segment. Over 125 to 131 (HTHEKRS) the chain is Extracellular. A helical membrane pass occupies residues 132-152 (MIVGILCVFFGSIMYFSPLTI). The MtN3/slv 2 domain occupies 133-216 (IVGILCVFFG…LILYACYYRT (84 aa)). The Cytoplasmic portion of the chain corresponds to 153 to 165 (MGKVIKTKSVEYM). A helical membrane pass occupies residues 166–186 (PFFLSLVCFLNGVCWTAYALI). The Extracellular segment spans residues 187–189 (RFD). The helical transmembrane segment at 190-210 (IYVTIPNGLGALFGAIQLILY) threads the bilayer. The Cytoplasmic portion of the chain corresponds to 211–259 (ACYYRTTPKKTKAAKDVEMPSVVVSGTGAAAAAGGGNTGGGSISVTVER).

It belongs to the SWEET sugar transporter family. As to quaternary structure, forms homooligomers and/or heterooligomers.

It is found in the cell membrane. Its function is as follows. Mediates both low-affinity uptake and efflux of sugar across the plasma membrane. The chain is Bidirectional sugar transporter SWEET6a (SWEET6A) from Oryza sativa subsp. indica (Rice).